The following is a 339-amino-acid chain: Fructose-1,6-bisphosphatase class 1 (339 aa).

Mg(2+) is bound by residues Glu-94, Asp-116, Leu-118, and Asp-119. Substrate-binding positions include 119–122 (DGSS), Asn-210, and Lys-276. Residue Glu-282 coordinates Mg(2+).

This sequence belongs to the FBPase class 1 family. In terms of assembly, homotetramer. Mg(2+) is required as a cofactor.

Its subcellular location is the cytoplasm. The catalysed reaction is beta-D-fructose 1,6-bisphosphate + H2O = beta-D-fructose 6-phosphate + phosphate. It functions in the pathway carbohydrate biosynthesis; gluconeogenesis. The polypeptide is Fructose-1,6-bisphosphatase class 1 (Burkholderia ambifaria (strain MC40-6)).